Here is a 392-residue protein sequence, read N- to C-terminus: 8-amino-7-oxononanoate synthase (392 aa).

R19 provides a ligand contact to substrate. A pyridoxal 5'-phosphate-binding site is contributed by G106 to Y107. Substrate is bound at residue H131. The pyridoxal 5'-phosphate site is built by S176, H204, and T233. K236 bears the N6-(pyridoxal phosphate)lysine mark. Position 350 (T350) interacts with substrate.

This sequence belongs to the class-II pyridoxal-phosphate-dependent aminotransferase family. BioF subfamily. Homodimer. Requires pyridoxal 5'-phosphate as cofactor.

The catalysed reaction is 6-carboxyhexanoyl-[ACP] + L-alanine + H(+) = (8S)-8-amino-7-oxononanoate + holo-[ACP] + CO2. The protein operates within cofactor biosynthesis; biotin biosynthesis. Catalyzes the decarboxylative condensation of pimeloyl-[acyl-carrier protein] and L-alanine to produce 8-amino-7-oxononanoate (AON), [acyl-carrier protein], and carbon dioxide. In Pseudomonas fluorescens (strain ATCC BAA-477 / NRRL B-23932 / Pf-5), this protein is 8-amino-7-oxononanoate synthase.